The chain runs to 133 residues: Membrane protein FAM174B (133 aa).

The first 19 residues, 1–19 (MWLYTFAVALIVIAQEING), serve as a signal peptide directing secretion. Topologically, residues 20-67 (EPHTRPSSATPLNATLPPQEEGSAQNTTDAAVGSRLSTILRDLPTIKN) are extracellular. The disordered stretch occupies residues 22-47 (HTRPSSATPLNATLPPQEEGSAQNTT). N-linked (GlcNAc...) asparagine glycosylation is found at asparagine 32, asparagine 45, and asparagine 67. The helical transmembrane segment at 68 to 88 (ISIFICVLTTLLITCLVIKIC) threads the bilayer. Over 89-133 (RSARKIRKTRKYDIITTPAERVEMAPLNEENDEEDDSTLFDVKYR) the chain is Cytoplasmic. Positions 113–133 (APLNEENDEEDDSTLFDVKYR) are disordered. Residues 117–126 (EENDEEDDST) are compositionally biased toward acidic residues.

This sequence belongs to the FAM174 family.

Its subcellular location is the cell membrane. The protein resides in the golgi apparatus. Functionally, essential for Golgi structural integrity. The protein is Membrane protein FAM174B (Fam174b) of Danio rerio (Zebrafish).